Reading from the N-terminus, the 280-residue chain is Diaminopimelate epimerase (280 aa).

2 residues coordinate substrate: Asn-11 and Asn-62. Cys-71 functions as the Proton donor in the catalytic mechanism. Residues 72–73 (GN), Asn-160, Asn-193, and 211–212 (ER) each bind substrate. The active-site Proton acceptor is Cys-220. Position 221 to 222 (221 to 222 (GT)) interacts with substrate.

Belongs to the diaminopimelate epimerase family. In terms of assembly, homodimer.

It is found in the cytoplasm. The catalysed reaction is (2S,6S)-2,6-diaminopimelate = meso-2,6-diaminopimelate. Its pathway is amino-acid biosynthesis; L-lysine biosynthesis via DAP pathway; DL-2,6-diaminopimelate from LL-2,6-diaminopimelate: step 1/1. Catalyzes the stereoinversion of LL-2,6-diaminopimelate (L,L-DAP) to meso-diaminopimelate (meso-DAP), a precursor of L-lysine and an essential component of the bacterial peptidoglycan. The chain is Diaminopimelate epimerase from Acetivibrio thermocellus (strain ATCC 27405 / DSM 1237 / JCM 9322 / NBRC 103400 / NCIMB 10682 / NRRL B-4536 / VPI 7372) (Clostridium thermocellum).